The sequence spans 473 residues: Chromosomal replication initiator protein DnaA (473 aa).

A domain I, interacts with DnaA modulators region spans residues 1-76 (MNYHSTNVNE…RTVLGRVIGP (76 aa)). Residues 76–135 (PNASLQYNALVDNSSPKYPGTVTLAGCADGGQAAEQFDVNLLHRHMPNAATHSEAQDFDT) are domain II. Residues 136–353 (QLNSRLNFRN…GTLVSLITNS (218 aa)) form a domain III, AAA+ region region. Residues Gly-181, Gly-183, Lys-184, and Thr-185 each coordinate ATP. Positions 354–473 (VVVGKEIDLT…VERAEQLIAN (120 aa)) are domain IV, binds dsDNA.

It belongs to the DnaA family. As to quaternary structure, oligomerizes as a right-handed, spiral filament on DNA at oriC.

It is found in the cytoplasm. Plays an essential role in the initiation and regulation of chromosomal replication. ATP-DnaA binds to the origin of replication (oriC) to initiate formation of the DNA replication initiation complex once per cell cycle. Binds the DnaA box (a 9 base pair repeat at the origin) and separates the double-stranded (ds)DNA. Forms a right-handed helical filament on oriC DNA; dsDNA binds to the exterior of the filament while single-stranded (ss)DNA is stabiized in the filament's interior. The ATP-DnaA-oriC complex binds and stabilizes one strand of the AT-rich DNA unwinding element (DUE), permitting loading of DNA polymerase. After initiation quickly degrades to an ADP-DnaA complex that is not apt for DNA replication. Binds acidic phospholipids. The chain is Chromosomal replication initiator protein DnaA from Porphyromonas gingivalis (strain ATCC 33277 / DSM 20709 / CIP 103683 / JCM 12257 / NCTC 11834 / 2561).